The sequence spans 271 residues: Protein PXR1 (271 aa).

One can recognise a G-patch domain in the interval 25 to 72; it reads TSRFGHQFLEKFGWKPGMGLGLSPMNSNTSHIKVSIKDDNVGLGAKLK. A disordered region spans residues 147-239; sequence SNAKKRKREG…SASNIPDAVN (93 aa). Residues 157–168 show a composition bias toward acidic residues; that stretch reads DDSEDEDDDDKE. The segment covering 175 to 203 has biased composition (basic residues); that stretch reads KKHKKHKKHKKDKKKDKKDKKEHKKHKKE. Over residues 204 to 221 the composition is skewed to basic and acidic residues; that stretch reads EKRLKKEKRAEKTKETKK. Phosphoserine is present on Ser-230.

The protein belongs to the PINX1 family. As to quaternary structure, interacts with EST2.

Its subcellular location is the nucleus. The protein localises to the nucleolus. Functionally, involved in rRNA-processing at A0, A1 and A2 sites through its action in U18 and U24 snoRNA 3'-end final trimming. Negative regulator of telomerase through competition for binding to EST2 with TLC1. The sequence is that of Protein PXR1 (PXR1) from Saccharomyces cerevisiae (strain ATCC 204508 / S288c) (Baker's yeast).